The sequence spans 80 residues: ATP synthase subunit c (80 aa).

2 consecutive transmembrane segments (helical) span residues 11–31 and 54–74; these read IAAT…IGIL and FIVM…GLYI.

This sequence belongs to the ATPase C chain family. As to quaternary structure, F-type ATPases have 2 components, F(1) - the catalytic core - and F(0) - the membrane proton channel. F(1) has five subunits: alpha(3), beta(3), gamma(1), delta(1), epsilon(1). F(0) has three main subunits: a(1), b(2) and c(10-14). The alpha and beta chains form an alternating ring which encloses part of the gamma chain. F(1) is attached to F(0) by a central stalk formed by the gamma and epsilon chains, while a peripheral stalk is formed by the delta and b chains.

It localises to the cell membrane. Functionally, f(1)F(0) ATP synthase produces ATP from ADP in the presence of a proton or sodium gradient. F-type ATPases consist of two structural domains, F(1) containing the extramembraneous catalytic core and F(0) containing the membrane proton channel, linked together by a central stalk and a peripheral stalk. During catalysis, ATP synthesis in the catalytic domain of F(1) is coupled via a rotary mechanism of the central stalk subunits to proton translocation. Its function is as follows. Key component of the F(0) channel; it plays a direct role in translocation across the membrane. A homomeric c-ring of between 10-14 subunits forms the central stalk rotor element with the F(1) delta and epsilon subunits. This Baumannia cicadellinicola subsp. Homalodisca coagulata protein is ATP synthase subunit c.